An 88-amino-acid chain; its full sequence is Insulin-related peptide 4 (88 aa).

The first 19 residues, 1–19 (MKLTLIILLVVAYSWCSEA), serve as a signal peptide directing secretion. Residues 20 to 45 (QNEARVFCGRVLSERLAALCWGPNSV) constitute a propeptide that is removed on maturation. Arg-65 carries the arginine amide modification. Positions 69 to 88 (GLATECCDKACTVEELLSYC) are excised as a propeptide.

It belongs to the insulin family. In terms of tissue distribution, DAGWWLTRGAARSLGGVR-amide: Expressed in corpora cardiaca (CC), corpora allata (CA), antennal lobe (AL) and gnathal ganglion (GNG) (at protein level). Expression in CC and CA detected in most animals, in AL and GNG in few animals (at protein level).

Its subcellular location is the secreted. This chain is Insulin-related peptide 4, found in Agrotis ipsilon (Black cutworm moth).